A 521-amino-acid polypeptide reads, in one-letter code: Acidic amino acid decarboxylase GADL1 (521 aa).

Basic and acidic residues predominate over residues 1-12 (MSLLPDRERAPD). Residues 1–20 (MSLLPDRERAPDGDISPQEM) are disordered. K333 carries the post-translational modification N6-(pyridoxal phosphate)lysine.

The protein belongs to the group II decarboxylase family. In terms of assembly, homodimer. It depends on pyridoxal 5'-phosphate as a cofactor. Expressed at highest levels in skeletal muscles. Also detected heart, spleen and rumen.

It carries out the reaction L-aspartate + H(+) = beta-alanine + CO2. It catalyses the reaction 3-sulfino-L-alanine + H(+) = hypotaurine + CO2. The catalysed reaction is L-cysteate + H(+) = taurine + CO2. Functionally, catalyzes the decarboxylation of L-aspartate, 3-sulfino-L-alanine (cysteine sulfinic acid), and L-cysteate to beta-alanine, hypotaurine and taurine, respectively. The preferred substrate is L-aspartate. Does not exhibit any decarboxylation activity toward glutamate. In Bos taurus (Bovine), this protein is Acidic amino acid decarboxylase GADL1 (GADL1).